The following is a 253-amino-acid chain: Ubiquinone biosynthesis O-methyltransferase (253 aa).

Arginine 41, glycine 72, aspartate 93, and methionine 136 together coordinate S-adenosyl-L-methionine.

Belongs to the methyltransferase superfamily. UbiG/COQ3 family.

The catalysed reaction is a 3-demethylubiquinol + S-adenosyl-L-methionine = a ubiquinol + S-adenosyl-L-homocysteine + H(+). It carries out the reaction a 3-(all-trans-polyprenyl)benzene-1,2-diol + S-adenosyl-L-methionine = a 2-methoxy-6-(all-trans-polyprenyl)phenol + S-adenosyl-L-homocysteine + H(+). Its pathway is cofactor biosynthesis; ubiquinone biosynthesis. O-methyltransferase that catalyzes the 2 O-methylation steps in the ubiquinone biosynthetic pathway. The sequence is that of Ubiquinone biosynthesis O-methyltransferase from Chelativorans sp. (strain BNC1).